A 153-amino-acid polypeptide reads, in one-letter code: Ergochrome gene cluster protein CPUR_05425 (153 aa).

The protein operates within pigment biosynthesis. Functionally, part of the ergochrome gene cluster responsible for the typical purple-black color of the ergot sclerotia. The ergochrome gene cluster produces several ergot pigments including the yellow ergochrome secalonic acid and its derivatives, as well as the red anthraquinones endocrocin and clavorubin. The pathway begins with the synthesis of atrochrysone thioester by the polyketide synthase (PKS) CPUR_05437. The atrochrysone carboxyl ACP thioesterase CPUR_05436 then breaks the thioester bond and releases the atrochrysone carboxylic acid from CPUR_05437. The atrochrysone carboxylic acid is then converted to atrochrysone which is further transformed into emodin anthrone. The next step is performed by the anthrone oxygenase CPUR_05434 that catalyzes the oxidation of emodinanthrone to emodin. Emodin is further modified to yield monodictyphenone via several steps involving CPUR_05427, CPUR_05428, CPUR_05429 and CPUR_05430. The short chain dehydrogenase/reductase CPUR_05418 then catalyzes the C-5 ketoreduction to give the xanthone skeleton of the monomeric units. Ergochromes formation requires further dimerization steps of different xanthone units, probably catalyzed by the cytochrome P450 monooxygenase CPUR_05419. CPUR_05425, CPUR_05426 and CPUR_05431 are unique to Claviceps, thus it is likely that they are involved in further modification of xanthone units or in their dimerization. The yellow ergochromes and the red anthraquinone pigments endocrocin and clavorubin are products from the same PKS derived precursors and the latter are likely shunt products in the pathway of xanthone biosynthesis. It is proposed that atrochrysone carboxylic acid released from the PKS CPUR_05437 can also be converted to endocrocin anthrone which is further oxidized into endocrocin by CPUR_05435. Endocrocin could be then modified to clavorubin, possibly by CPUR_05423 and CPUR_05431. Clavorubin is the principal anthraquinone metabolite produced by the cluster with a much higher yield compared to endocrocin. The polypeptide is Ergochrome gene cluster protein CPUR_05425 (Claviceps purpurea (strain 20.1) (Ergot fungus)).